Reading from the N-terminus, the 232-residue chain is A-type ATP synthase subunit D (232 aa).

The segment at 200–232 is disordered; that stretch reads KKIKNKKEAEEEDEDEDESEMTDETVVQTPADD. The segment covering 209–222 has biased composition (acidic residues); that stretch reads EEEDEDEDESEMTD.

It belongs to the V-ATPase D subunit family. Has multiple subunits with at least A(3), B(3), C, D, E, F, H, I and proteolipid K(x).

Its subcellular location is the cell membrane. Functionally, component of the A-type ATP synthase that produces ATP from ADP in the presence of a proton gradient across the membrane. In Haloquadratum walsbyi (strain DSM 16790 / HBSQ001), this protein is A-type ATP synthase subunit D.